Here is a 248-residue protein sequence, read N- to C-terminus: Probable transcriptional regulatory protein PFL_4766 (248 aa).

Belongs to the TACO1 family.

Its subcellular location is the cytoplasm. The protein is Probable transcriptional regulatory protein PFL_4766 of Pseudomonas fluorescens (strain ATCC BAA-477 / NRRL B-23932 / Pf-5).